The sequence spans 168 residues: HTH-type transcriptional regulator IscR (168 aa).

Residues 2-131 (KLTSKGRYAV…DGISLGELMV (130 aa)) enclose the HTH rrf2-type domain. A DNA-binding region (H-T-H motif) is located at residues 28-51 (LADISERQGISLSYLEQLFSKLRK). Cys92, Cys98, and Cys104 together coordinate [2Fe-2S] cluster.

[2Fe-2S] cluster is required as a cofactor.

Functionally, regulates the transcription of several operons and genes involved in the biogenesis of Fe-S clusters and Fe-S-containing proteins. The polypeptide is HTH-type transcriptional regulator IscR (Aliivibrio salmonicida (strain LFI1238) (Vibrio salmonicida (strain LFI1238))).